A 784-amino-acid polypeptide reads, in one-letter code: MSRARDAGCVAAGIVIGASAWYCVYKYTRGKDQKKKRLTKPKNRASVGTGSRARAGLRAGFTIDLGPGFSPPNPVDIEIMNKAQGEASNLATTVAEEVAPAAPSPKVQNGAESKVQELNGAKTEANLESVVMPSATCTVTPPPKVAGGLTAAEAPEIIGAPKVLEAPSTTEASGAVAAPGPTVSPMIAQTPGPVVPSPTIVSTGPAAIPWAVAHPGAVQSPGPAVPPMAVQSLVPAAPSWAVVAPPGAVYIPVAAHFAGPAAASRVTQSPGTVIPPLPPPSSVLPRGVPSVPGRTVQSPGAAVHPVAAQSTGVVVPPRAVQYSGAAVTSGGAAVPSGGAATPRAAASTQRTASTEVMQVPRVAAATEATETPRIGTPAMVAEASLPVHSGAAENPGTSGSSKTAATGKKAAPGAHTGAIPKAGSATGAVPKGGGGKGGNKNRSGGKGKNRKNKVDVDELGMGFRPGDGAAAAAAASANGGQAFLAEIPESEEGESGWTDTESDSDSEPDVPQRGKGKRTIPMHKRPFPYEIDEILGVRDLRKVLALLQKSDDPFIQQVALLTLSNNANYSCNQETIRKLGGLPIIANMINKTDPHIKEKALMAMNNLSENYENQGRLQVYMNKVMDDIMASNLNSAVQVVGLKFLTNMTITNDYQHLLVNSIANFFRLLSQGGGKIKVEILKILSNFAENPDMLKKLLGTQVPSSFSSLYNSYVESEILINALTLFEIIFDNLRAEVFNYREFNKGSLFYLCTTSGVCVKKIRALANHHDLLVKVKVIKLVNKF.

The Mitochondrial intermembrane segment spans residues 1-6; sequence MSRARD. 2 mitochondrion outer membrane (MOM)-targeting sequence regions span residues 1 to 6 and 26 to 40; these read MSRARD and KYTR…RLTK. Residues 7-27 form a helical; Signal-anchor membrane-spanning segment; it reads AGCVAAGIVIGASAWYCVYKY. Over 28 to 784 the chain is Cytoplasmic; that stretch reads TRGKDQKKKR…VKVIKLVNKF (757 aa). 3 disordered regions span residues 328 to 353, 388 to 461, and 488 to 522; these read TSGG…RTAS, HSGA…ELGM, and PESE…TIPM. A compositionally biased stretch (low complexity) spans 396–418; sequence GTSGSSKTAATGKKAAPGAHTGA. Acidic residues predominate over residues 488–508; sequence PESEEGESGWTDTESDSDSEP. 3 ARM repeats span residues 528-568, 570-609, and 650-689; these read PYEI…NNAN, SCNQ…NLSE, and ITND…NFAE.

Belongs to the eutherian X-chromosome-specific Armcx family. As to expression, widely expressed in the adult nervous tissue, especially in the forebrain, including the cerebral cortex, hippocampus and thalamus.

It localises to the mitochondrion. The protein localises to the mitochondrion outer membrane. In terms of biological role, may regulate the dynamics and distribution of mitochondria in neural cells. This is Armadillo repeat-containing X-linked protein 2 (Armcx2) from Mus musculus (Mouse).